The following is a 310-amino-acid chain: Thioesterase pytI (310 aa).

2 helical membrane passes run 14–34 and 95–115; these read SLTP…YFAL and LLGG…IFVA. The interval 168–195 is disordered; that stretch reads TLSDDASTTTSSDNSRASTDHGADSEVE. Low complexity predominate over residues 170–184; sequence SDDASTTTSSDNSRA.

This sequence belongs to the AMT4 thioesterase family.

The protein localises to the membrane. It participates in secondary metabolite biosynthesis. Its function is as follows. Thioesterase; part of the gene cluster that mediates the biosynthesis of pyranterreones, a family of antioxidative compounds. The first step of pyranonigrins biosynthesis is performed by the hybrid PKS-NRPS synthetase pytA that condenses 4 malonyl-CoA units ato the acetyl starter unit by the modular PKS of pytA. The acyl chain is then connected to an L-serine through the amide bond by the modular NRPS of pytA. A tetramic acid is formed and released from the PKS-NRPS pytA to give pyranterreone 5 with the help of the thioesterase pytI. Pyranterreone 5 could be methylated by pytC to afford pyranterreone 6. Both pyranterreones 5 and 6 are subsequently oxidized by the FAD-linked oxidoreductase pytB and the cytochrome P450 monooxygenase pytD to form the fused gamma-pyrone core, resulting in pyranterreones 7 and 11, respectively. The hydroxy group at C-8 of pyranterreones 7 and 11 are dehydrated by the aspartyl protease pytH to form a delta-7 double bond to give pyranterreones 3 and 1, 2 accordingly. The exo-methylene of pyranterreone 3 could be reduced into a pendant methyl by reductase pytE to provide pyranterreone 4, also known as cordylactam. Pyranterreone 4 can be reconverted to pyranterreone 3 through pytB-catalyzed dehydrogenation or further oxidized to pyranterreones 9 and 10. The chain is Thioesterase pytI from Aspergillus terreus.